The chain runs to 763 residues: DEK domain-containing chromatin-associated protein 3 (763 aa).

Disordered stretches follow at residues 1-324 and 458-681; these read MGED…RERK and TGDV…SDKV. Polar residues predominate over residues 11-20; sequence PTANKTTSLE. 4 stretches are compositionally biased toward basic and acidic residues: residues 32 to 44, 72 to 97, 124 to 172, and 180 to 242; these read AGGK…AKDE, SEVK…KDEG, TVMK…KANG, and DIKE…KVED. Positions 60–96 form a coiled coil; sequence KDDEKAETEDKESEVKKNEDNAETQKMEEKVEVTKDE. The stretch at 214–286 forms a coiled coil; it reads GKEKEDKEEN…KEESKGSKKR (73 aa). Over residues 243-252 the composition is skewed to acidic residues; that stretch reads EKEGSEDEND. A compositionally biased stretch (basic and acidic residues) spans 253–264; that stretch reads NEKVESKDAKED. A compositionally biased stretch (acidic residues) spans 265-277; that stretch reads EKEETNDDKEDEK. The Nuclear localization signal 1 signature appears at 284-291; it reads KKRGKGTS. Basic and acidic residues predominate over residues 295-311; that stretch reads KVREKNKTEEVKKDAEP. Over residues 475–484 the composition is skewed to basic residues; that stretch reads KGAKRKRTPK. Positions 483 to 490 match the Nuclear localization signal 2 motif; sequence PKKTSPTA. Residues 485 to 496 are compositionally biased toward low complexity; sequence KTSPTAGSSSSK. The stretch at 513–551 forms a coiled coil; sequence KKSLAHSDDESEEEKEEEEKQEEEKAEEKEEKKEEENEN. The span at 521–533 shows a compositional bias: acidic residues; that stretch reads DESEEEKEEEEKQ. A compositionally biased stretch (basic and acidic residues) spans 534 to 547; sequence EEEKAEEKEEKKEE. The segment covering 557–578 has biased composition (acidic residues); sequence SEDEAPQPSESEEKDESEEHSE. 2 stretches are compositionally biased toward low complexity: residues 606–615 and 650–660; these read AVVAAKSSPP and PIKASPAPSKS. The span at 661–681 shows a compositional bias: basic and acidic residues; the sequence is ASKEKPVKRAGKGKDKPSDKV. The region spanning 676–731 is the DEK-C domain; it reads KPSDKVLKNAIVEILKRVDFSTATFTDILKELAKEFTEDLTPRKSSIKMIIQEELT. 2 consecutive DNA-binding regions follow at residues 694-708 and 723-727; these read DFST…KELA and KMIIQ. A coiled-coil region spans residues 723 to 753; sequence KMIIQEELTKLADEEEEEEKKEEDSEKEEAG. Residues 730–763 form a disordered region; that stretch reads LTKLADEEEEEEKKEEDSEKEEAGGSGGGEEVKA. Positions 753–763 are enriched in gly residues; sequence GGSGGGEEVKA.

In terms of assembly, found in a mRNA splicing-dependent exon junction complex (EJC). Binds specifically histones H3 and H4. Interacts with TOP1A, SCC3, At1g61730, At1g20940, At1g13930, DEK4, HDT1, NIT1, SHL, CYP19-1, GEBPL, HSP70-3, PDP2, PDP3, KIN2, RPL11A and PDS5A. In terms of tissue distribution, highly expressed in young seedlings.

Its subcellular location is the nucleus. It localises to the nucleolus. Its function is as follows. Chromatin-associated protein which contributes to the modulation of chromatin structure (such as super-helical structure of DNA) and function. Binds to chromatin of protein-coding genes throughout the genome to regulate nucleosome occupancy and chromatin accessibility, and to modulate the expression of target genes. Negative regulator of stress tolerance (e.g. high salt). This is DEK domain-containing chromatin-associated protein 3 from Arabidopsis thaliana (Mouse-ear cress).